The chain runs to 159 residues: 6,7-dimethyl-8-ribityllumazine synthase (159 aa).

5-amino-6-(D-ribitylamino)uracil is bound by residues Phe-23, 58–60 (AYE), and 82–84 (TII). The active-site Proton donor is the His-90. 5-amino-6-(D-ribitylamino)uracil is bound at residue Leu-115. Residue Arg-129 coordinates (2S)-2-hydroxy-3-oxobutyl phosphate.

Belongs to the DMRL synthase family. As to quaternary structure, forms an icosahedral capsid composed of 60 subunits, arranged as a dodecamer of pentamers.

The enzyme catalyses (2S)-2-hydroxy-3-oxobutyl phosphate + 5-amino-6-(D-ribitylamino)uracil = 6,7-dimethyl-8-(1-D-ribityl)lumazine + phosphate + 2 H2O + H(+). Its pathway is cofactor biosynthesis; riboflavin biosynthesis; riboflavin from 2-hydroxy-3-oxobutyl phosphate and 5-amino-6-(D-ribitylamino)uracil: step 1/2. Functionally, catalyzes the formation of 6,7-dimethyl-8-ribityllumazine by condensation of 5-amino-6-(D-ribitylamino)uracil with 3,4-dihydroxy-2-butanone 4-phosphate. This is the penultimate step in the biosynthesis of riboflavin. The chain is 6,7-dimethyl-8-ribityllumazine synthase from Blochmanniella floridana.